Here is a 348-residue protein sequence, read N- to C-terminus: Ion-translocating oxidoreductase complex subunit D (348 aa).

The next 4 membrane-spanning stretches (helical) occupy residues 23–43 (WVLA…GYGT), 44–64 (LIQL…IMLL), 72–91 (ALRD…AIPP), and 126–146 (IAYV…MAPI). An FMN phosphoryl threonine modification is found at Thr187. Transmembrane regions (helical) follow at residues 214–234 (FAGI…LILL), 243–263 (IPMA…LFAP), 266–286 (TASP…FFIA), 300–320 (LIYG…GGFP), and 321–341 (DGVA…DYYT).

This sequence belongs to the NqrB/RnfD family. The complex is composed of six subunits: RnfA, RnfB, RnfC, RnfD, RnfE and RnfG. The cofactor is FMN.

Its subcellular location is the cell inner membrane. In terms of biological role, part of a membrane-bound complex that couples electron transfer with translocation of ions across the membrane. This is Ion-translocating oxidoreductase complex subunit D from Vibrio cholerae serotype O1 (strain ATCC 39315 / El Tor Inaba N16961).